The sequence spans 249 residues: Coproheme decarboxylase (249 aa).

Residues arginine 131, 145–149 (YPMDK), histidine 172, and glutamine 185 each bind Fe-coproporphyrin III. The active site involves tyrosine 145.

It belongs to the ChdC family. Type 1 subfamily. The cofactor is Fe-coproporphyrin III.

The enzyme catalyses Fe-coproporphyrin III + 2 H2O2 + 2 H(+) = heme b + 2 CO2 + 4 H2O. The catalysed reaction is Fe-coproporphyrin III + H2O2 + H(+) = harderoheme III + CO2 + 2 H2O. It catalyses the reaction harderoheme III + H2O2 + H(+) = heme b + CO2 + 2 H2O. Its pathway is porphyrin-containing compound metabolism; protoheme biosynthesis. Its function is as follows. Involved in coproporphyrin-dependent heme b biosynthesis. Catalyzes the decarboxylation of Fe-coproporphyrin III (coproheme) to heme b (protoheme IX), the last step of the pathway. The reaction occurs in a stepwise manner with a three-propionate intermediate. The polypeptide is Coproheme decarboxylase (Staphylococcus haemolyticus (strain JCSC1435)).